A 414-amino-acid chain; its full sequence is Multifunctional CCA protein (414 aa).

Residues Gly-8 and Arg-11 each coordinate ATP. Positions 8 and 11 each coordinate CTP. Mg(2+)-binding residues include Asp-21 and Asp-23. Residues Arg-91, Arg-137, and Arg-140 each contribute to the ATP site. Positions 91, 137, and 140 each coordinate CTP. The HD domain maps to 228–329; sequence TGIHTLLTLA…LKLLDTIDVW (102 aa).

Belongs to the tRNA nucleotidyltransferase/poly(A) polymerase family. Bacterial CCA-adding enzyme type 1 subfamily. As to quaternary structure, monomer. Can also form homodimers and oligomers. The cofactor is Mg(2+). Requires Ni(2+) as cofactor.

The catalysed reaction is a tRNA precursor + 2 CTP + ATP = a tRNA with a 3' CCA end + 3 diphosphate. The enzyme catalyses a tRNA with a 3' CCA end + 2 CTP + ATP = a tRNA with a 3' CCACCA end + 3 diphosphate. In terms of biological role, catalyzes the addition and repair of the essential 3'-terminal CCA sequence in tRNAs without using a nucleic acid template. Adds these three nucleotides in the order of C, C, and A to the tRNA nucleotide-73, using CTP and ATP as substrates and producing inorganic pyrophosphate. tRNA 3'-terminal CCA addition is required both for tRNA processing and repair. Also involved in tRNA surveillance by mediating tandem CCA addition to generate a CCACCA at the 3' terminus of unstable tRNAs. While stable tRNAs receive only 3'-terminal CCA, unstable tRNAs are marked with CCACCA and rapidly degraded. The sequence is that of Multifunctional CCA protein from Edwardsiella ictaluri (strain 93-146).